A 523-amino-acid polypeptide reads, in one-letter code: Bifunctional purine biosynthesis protein PurH (523 aa).

The MGS-like domain occupies 1–149 (MSDPVIKRAL…KNNESVTVIT (149 aa)).

It belongs to the PurH family.

The catalysed reaction is (6R)-10-formyltetrahydrofolate + 5-amino-1-(5-phospho-beta-D-ribosyl)imidazole-4-carboxamide = 5-formamido-1-(5-phospho-D-ribosyl)imidazole-4-carboxamide + (6S)-5,6,7,8-tetrahydrofolate. It carries out the reaction IMP + H2O = 5-formamido-1-(5-phospho-D-ribosyl)imidazole-4-carboxamide. The protein operates within purine metabolism; IMP biosynthesis via de novo pathway; 5-formamido-1-(5-phospho-D-ribosyl)imidazole-4-carboxamide from 5-amino-1-(5-phospho-D-ribosyl)imidazole-4-carboxamide (10-formyl THF route): step 1/1. It participates in purine metabolism; IMP biosynthesis via de novo pathway; IMP from 5-formamido-1-(5-phospho-D-ribosyl)imidazole-4-carboxamide: step 1/1. The polypeptide is Bifunctional purine biosynthesis protein PurH (Chlorobaculum parvum (strain DSM 263 / NCIMB 8327) (Chlorobium vibrioforme subsp. thiosulfatophilum)).